The primary structure comprises 394 residues: Elongation factor Tu 1 (394 aa).

In terms of domain architecture, tr-type G spans 10-204; it reads KPHVNVGTIG…ALDSYIPEPQ (195 aa). The tract at residues 19-26 is G1; the sequence is GHVDHGKT. Residue 19–26 participates in GTP binding; that stretch reads GHVDHGKT. Thr-26 is a binding site for Mg(2+). The interval 60–64 is G2; the sequence is GITIS. The segment at 81–84 is G3; it reads DCPG. Residues 81 to 85 and 136 to 139 contribute to the GTP site; these read DCPGH and NKCD. The G4 stretch occupies residues 136–139; the sequence is NKCD. Positions 174-176 are G5; that stretch reads SAL.

It belongs to the TRAFAC class translation factor GTPase superfamily. Classic translation factor GTPase family. EF-Tu/EF-1A subfamily. As to quaternary structure, monomer.

It localises to the cytoplasm. The enzyme catalyses GTP + H2O = GDP + phosphate + H(+). Its function is as follows. GTP hydrolase that promotes the GTP-dependent binding of aminoacyl-tRNA to the A-site of ribosomes during protein biosynthesis. This is Elongation factor Tu 1 from Pseudoalteromonas translucida (strain TAC 125).